The primary structure comprises 307 residues: Coproporphyrin III ferrochelatase (307 aa).

Residues Tyr-12, Arg-29, 45-46 (RY), Ser-53, and Tyr-124 contribute to the Fe-coproporphyrin III site. 2 residues coordinate Fe(2+): His-181 and Glu-263.

It belongs to the ferrochelatase family.

Its subcellular location is the cytoplasm. It carries out the reaction Fe-coproporphyrin III + 2 H(+) = coproporphyrin III + Fe(2+). It functions in the pathway porphyrin-containing compound metabolism; protoheme biosynthesis. In terms of biological role, involved in coproporphyrin-dependent heme b biosynthesis. Catalyzes the insertion of ferrous iron into coproporphyrin III to form Fe-coproporphyrin III. The sequence is that of Coproporphyrin III ferrochelatase from Staphylococcus aureus (strain COL).